Consider the following 587-residue polypeptide: MATAAYEQLKLHITPEKFYVEACDDGADDVLTIDRVSTEVTLAVKKDVPPSAVTRPIFGILGTIHLVAGNYLIVITKKIKVGEFFSHVIWKATDFDVLSYKKTMLHLTDIQLQDNKTFLAMLNHVLNVDGFYFSTTYDLTHTLQRLSNTSPEFQEMSLLERADQRFVWNGHLLRELSAQPEVHRFALPVLHGFITMHSCSINGKYFDWILISRRSCFRAGVRYYVRGIDSEGHAANFVETEQIVHYNGSKASFVQTRGSIPVFWSQRPNLKYKPLPQISKVANHMDGFQRHFDSQVIIYGKQVIINLINQKGSEKPLEQTFATMVSSLGSGMMRYIAFDFHKECKNMRWDRLSILLDQVAEMQDELSYFLVDSAGQVVANQEGVFRSNCMDCLDRTNVIQSLLARRSLQAQLQRLGVLHVGQKLEEQDEFEKIYKNAWADNANACAKQYAGTGALKTDFTRTGKRTHLGLIMDGWNSMIRYYKNNFSDGFRQDSIDLFLGNYSVDELESHSPLSVPRDWKFLALPIIMVVAFSMCIICLLMAGDTWTETLAYVLFWGVASIGTFFIILYNGKDFVDAPRLVQKEKID.

Over 1–520 the chain is Cytoplasmic; the sequence is MATAAYEQLK…SPLSVPRDWK (520 aa). An SAC domain is found at 122-451; the sequence is LNHVLNVDGF…ANACAKQYAG (330 aa). The segment at 452 to 587 is essential for phosphatidylinositol-4-phosphate phosphatase activity; it reads TGALKTDFTR…PRLVQKEKID (136 aa). Lys456 bears the N6-acetyllysine mark. Residues 521 to 541 traverse the membrane as a helical segment; it reads FLALPIIMVVAFSMCIICLLM. At 542–548 the chain is on the lumenal side; the sequence is AGDTWTE. The helical transmembrane segment at 549–569 threads the bilayer; the sequence is TLAYVLFWGVASIGTFFIILY. At 570 to 587 the chain is on the cytoplasmic side; that stretch reads NGKDFVDAPRLVQKEKID.

As to quaternary structure, interacts with TMEM39A. Interacts with SEC23A and SEC24A; this interaction is reduced in the absence of TMEM39A. Interacts with PLEKHA3 and VAPA and/or VAPB to form a ternary complex.

It is found in the endoplasmic reticulum membrane. It localises to the golgi apparatus membrane. It carries out the reaction a 1,2-diacyl-sn-glycero-3-phospho-(1D-myo-inositol-3-phosphate) + H2O = a 1,2-diacyl-sn-glycero-3-phospho-(1D-myo-inositol) + phosphate. It catalyses the reaction a 1,2-diacyl-sn-glycero-3-phospho-(1D-myo-inositol 4-phosphate) + H2O = a 1,2-diacyl-sn-glycero-3-phospho-(1D-myo-inositol) + phosphate. In terms of biological role, phosphoinositide phosphatase which catalyzes the hydrolysis of phosphatidylinositol 4-phosphate (PtdIns(4)P), phosphatidylinositol 3-phosphate (PtdIns(3)P) and has low activity towards phosphatidylinositol-3,5-bisphosphate (PtdIns(3,5)P2). Shows a very robust PtdIns(4)P phosphatase activity when it binds PtdIns(4)P in a 'cis' configuration in the cellular environment, with much less activity seen when it binds PtdIns(4)P in 'trans' configuration. PtdIns(4)P phosphatase activity (when it binds PtdIns(4)P in 'trans' configuration) is enhanced in the presence of PLEKHA3. This Pongo abelii (Sumatran orangutan) protein is Phosphatidylinositol-3-phosphatase SAC1 (SACM1L).